Consider the following 182-residue polypeptide: Protein Syd (182 aa).

Belongs to the Syd family.

Its subcellular location is the cell inner membrane. In terms of biological role, interacts with the SecY protein in vivo. May bind preferentially to an uncomplexed state of SecY, thus functioning either as a chelating agent for excess SecY in the cell or as a regulatory factor that negatively controls the translocase function. This is Protein Syd from Pectobacterium carotovorum subsp. carotovorum (strain PC1).